We begin with the raw amino-acid sequence, 140 residues long: Large ribosomal subunit protein uL11 (140 aa).

It belongs to the universal ribosomal protein uL11 family. As to quaternary structure, part of the ribosomal stalk of the 50S ribosomal subunit. Interacts with L10 and the large rRNA to form the base of the stalk. L10 forms an elongated spine to which L12 dimers bind in a sequential fashion forming a multimeric L10(L12)X complex. One or more lysine residues are methylated.

Forms part of the ribosomal stalk which helps the ribosome interact with GTP-bound translation factors. This chain is Large ribosomal subunit protein uL11, found in Caldanaerobacter subterraneus subsp. tengcongensis (strain DSM 15242 / JCM 11007 / NBRC 100824 / MB4) (Thermoanaerobacter tengcongensis).